We begin with the raw amino-acid sequence, 710 residues long: Polyribonucleotide nucleotidyltransferase (710 aa).

Residues Asp485 and Asp491 each coordinate Mg(2+). In terms of domain architecture, KH spans 552–611; the sequence is PKILTLTINPDKIRDVIGPSGKVINKIIEETGVKIDIEQDGTVYISSLDTAMNQKAKQII. The 69-residue stretch at 621–689 folds into the S1 motif domain; it reads GETYHGKVKR…NQGRVNLSRK (69 aa).

It belongs to the polyribonucleotide nucleotidyltransferase family. Mg(2+) is required as a cofactor.

It localises to the cytoplasm. It carries out the reaction RNA(n+1) + phosphate = RNA(n) + a ribonucleoside 5'-diphosphate. Involved in mRNA degradation. Catalyzes the phosphorolysis of single-stranded polyribonucleotides processively in the 3'- to 5'-direction. The protein is Polyribonucleotide nucleotidyltransferase of Shouchella clausii (strain KSM-K16) (Alkalihalobacillus clausii).